A 396-amino-acid polypeptide reads, in one-letter code: S-adenosylmethionine synthase (396 aa).

Position 16 (H16) interacts with ATP. Residue D18 coordinates Mg(2+). E44 lines the K(+) pocket. 2 residues coordinate L-methionine: E57 and Q100. Positions 100-110 (QSPDIAQGVDR) are flexible loop. ATP-binding positions include 167–169 (DAK), 233–234 (RF), D242, 248–249 (RK), A265, and K269. Residue D242 coordinates L-methionine. An L-methionine-binding site is contributed by K273.

Belongs to the AdoMet synthase family. As to quaternary structure, homotetramer; dimer of dimers. Mg(2+) serves as cofactor. Requires K(+) as cofactor.

The protein resides in the cytoplasm. It carries out the reaction L-methionine + ATP + H2O = S-adenosyl-L-methionine + phosphate + diphosphate. The protein operates within amino-acid biosynthesis; S-adenosyl-L-methionine biosynthesis; S-adenosyl-L-methionine from L-methionine: step 1/1. Catalyzes the formation of S-adenosylmethionine (AdoMet) from methionine and ATP. The overall synthetic reaction is composed of two sequential steps, AdoMet formation and the subsequent tripolyphosphate hydrolysis which occurs prior to release of AdoMet from the enzyme. The protein is S-adenosylmethionine synthase of Paraburkholderia xenovorans (strain LB400).